The following is a 308-amino-acid chain: Ornithine carbamoyltransferase (308 aa).

Residues 56-59 (STRT), Q83, R107, and 134-137 (HPCQ) contribute to the carbamoyl phosphate site. L-ornithine is bound by residues N165, D225, and 229 to 230 (SM). Carbamoyl phosphate is bound by residues 266–267 (CL) and R294.

This sequence belongs to the aspartate/ornithine carbamoyltransferase superfamily. OTCase family.

It localises to the cytoplasm. It catalyses the reaction carbamoyl phosphate + L-ornithine = L-citrulline + phosphate + H(+). The protein operates within amino-acid biosynthesis; L-arginine biosynthesis; L-arginine from L-ornithine and carbamoyl phosphate: step 1/3. In terms of biological role, reversibly catalyzes the transfer of the carbamoyl group from carbamoyl phosphate (CP) to the N(epsilon) atom of ornithine (ORN) to produce L-citrulline. The chain is Ornithine carbamoyltransferase from Paracoccus denitrificans (strain Pd 1222).